The primary structure comprises 74 residues: Conotoxin AbVIL (74 aa).

Residues 1–17 form the signal peptide; it reads VLIIAVLFLTACQLTTA. Residues 17 to 41 form a disordered region; it reads AETSSRGEQKHRAPRSTDKNSRMTK. A propeptide spanning residues 18-40 is cleaved from the precursor; that stretch reads ETSSRGEQKHRAPRSTDKNSRMT. A compositionally biased stretch (basic and acidic residues) spans 21–37; it reads SRGEQKHRAPRSTDKNS. 3 disulfides stabilise this stretch: Cys43–Cys57, Cys50–Cys61, and Cys56–Cys68.

Belongs to the conotoxin O1 superfamily. Expressed by the venom duct.

The protein localises to the secreted. This Conus abbreviatus (Abbreviated cone) protein is Conotoxin AbVIL.